The chain runs to 320 residues: UDP-N-acetylenolpyruvoylglucosamine reductase (320 aa).

In terms of domain architecture, FAD-binding PCMH-type spans 35–216 (RAGGPAQVLF…KQAMDEVQHH (182 aa)). Arginine 181 is a catalytic residue. Serine 230 (proton donor) is an active-site residue. The active site involves glutamate 300.

The protein belongs to the MurB family. Requires FAD as cofactor.

The protein resides in the cytoplasm. The catalysed reaction is UDP-N-acetyl-alpha-D-muramate + NADP(+) = UDP-N-acetyl-3-O-(1-carboxyvinyl)-alpha-D-glucosamine + NADPH + H(+). The protein operates within cell wall biogenesis; peptidoglycan biosynthesis. Cell wall formation. This is UDP-N-acetylenolpyruvoylglucosamine reductase from Brucella anthropi (strain ATCC 49188 / DSM 6882 / CCUG 24695 / JCM 21032 / LMG 3331 / NBRC 15819 / NCTC 12168 / Alc 37) (Ochrobactrum anthropi).